We begin with the raw amino-acid sequence, 380 residues long: Queuine tRNA-ribosyltransferase (380 aa).

Asp93 (proton acceptor) is an active-site residue. Substrate contacts are provided by residues 93–97 (DSGGF), Asp147, Gln198, and Gly225. The interval 256-262 (GVGLPSN) is RNA binding. Catalysis depends on Asp275, which acts as the Nucleophile. The segment at 280–284 (ARNGR) is RNA binding; important for wobble base 34 recognition. The Zn(2+) site is built by Cys313, Cys315, Cys318, and His344.

The protein belongs to the queuine tRNA-ribosyltransferase family. Homodimer. Within each dimer, one monomer is responsible for RNA recognition and catalysis, while the other monomer binds to the replacement base PreQ1. Zn(2+) serves as cofactor.

The enzyme catalyses 7-aminomethyl-7-carbaguanine + guanosine(34) in tRNA = 7-aminomethyl-7-carbaguanosine(34) in tRNA + guanine. It participates in tRNA modification; tRNA-queuosine biosynthesis. Its function is as follows. Catalyzes the base-exchange of a guanine (G) residue with the queuine precursor 7-aminomethyl-7-deazaguanine (PreQ1) at position 34 (anticodon wobble position) in tRNAs with GU(N) anticodons (tRNA-Asp, -Asn, -His and -Tyr). Catalysis occurs through a double-displacement mechanism. The nucleophile active site attacks the C1' of nucleotide 34 to detach the guanine base from the RNA, forming a covalent enzyme-RNA intermediate. The proton acceptor active site deprotonates the incoming PreQ1, allowing a nucleophilic attack on the C1' of the ribose to form the product. After dissociation, two additional enzymatic reactions on the tRNA convert PreQ1 to queuine (Q), resulting in the hypermodified nucleoside queuosine (7-(((4,5-cis-dihydroxy-2-cyclopenten-1-yl)amino)methyl)-7-deazaguanosine). The protein is Queuine tRNA-ribosyltransferase of Clostridium perfringens (strain 13 / Type A).